A 490-amino-acid chain; its full sequence is Pup--protein ligase (490 aa).

Residue E9 coordinates Mg(2+). R53 is a binding site for ATP. Y55 serves as a coordination point for Mg(2+). Catalysis depends on D57, which acts as the Proton acceptor. E63 serves as a coordination point for Mg(2+). S66 is a binding site for ATP. The interval 160–181 is disordered; it reads KTHPNGGPVPGSTDPASSTGVP. An ATP-binding site is contributed by W441.

It belongs to the Pup ligase/Pup deamidase family. Pup-conjugating enzyme subfamily.

It carries out the reaction ATP + [prokaryotic ubiquitin-like protein]-L-glutamate + [protein]-L-lysine = ADP + phosphate + N(6)-([prokaryotic ubiquitin-like protein]-gamma-L-glutamyl)-[protein]-L-lysine.. Its pathway is protein degradation; proteasomal Pup-dependent pathway. It participates in protein modification; protein pupylation. Functionally, catalyzes the covalent attachment of the prokaryotic ubiquitin-like protein modifier Pup to the proteasomal substrate proteins, thereby targeting them for proteasomal degradation. This tagging system is termed pupylation. The ligation reaction involves the side-chain carboxylate of the C-terminal glutamate of Pup and the side-chain amino group of a substrate lysine. This Rothia mucilaginosa (strain DY-18) (Stomatococcus mucilaginosus) protein is Pup--protein ligase.